A 77-amino-acid polypeptide reads, in one-letter code: Large ribosomal subunit protein bL28 (77 aa).

Belongs to the bacterial ribosomal protein bL28 family.

The polypeptide is Large ribosomal subunit protein bL28 (Methylibium petroleiphilum (strain ATCC BAA-1232 / LMG 22953 / PM1)).